A 170-amino-acid polypeptide reads, in one-letter code: uncharacterized protein (170 aa).

This is an uncharacterized protein from Myxococcus xanthus.